A 227-amino-acid chain; its full sequence is GFP-like non-fluorescent chromoprotein (227 aa).

The segment at residues 63–65 (AYG) is a cross-link (5-imidazolinone (Ala-Gly)). The residue at position 64 (tyrosine 64) is a 2,3-didehydrotyrosine.

The protein belongs to the GFP family. Homotetramer. In terms of processing, contains a chromophore consisting of modified amino acid residues. The chromophore is formed by autocatalytic backbone condensation between Xaa-N and Gly-(N+2), and oxidation of Tyr-(N+1) to didehydrotyrosine. Maturation of the chromophore requires nothing other than molecular oxygen. The precise stereochemistry of the tyrosine has not been determined.

Non-fluorescent pigment protein that is mauve in color. The wild-type form is non-fluorescent. This Condylactis gigantea (Giant Caribbean anemone) protein is GFP-like non-fluorescent chromoprotein.